The following is a 1382-amino-acid chain: Suppressor of organelle fusion 2 (1382 aa).

The BEACH domain maps to 229–463; it reads RIPLDEATSN…QLFNRPHPIR (235 aa). 2 WD repeats span residues 1094-1133 and 1140-1176; these read GHQE…DEIG and KHTR…LLAQ.

Belongs to the WD repeat WDR81 family. As to quaternary structure, interacts with sorf-1; the interaction is direct. Interacts with bec-1.

It localises to the early endosome. It is found in the late endosome. The protein localises to the cytoplasm. Together with sorf-1 negatively regulates the levels of phosphatidylinositol 3-phosphate (PtdIns3P) to enable the conversion of early endosomes to late endosomes. Binds to sorf-1 and the sorf-1-sorf-2 complex likely acts through bec-1, a non-catalytic subunit of phosphatidylinositol 3-kinase (PI3K), to suppress PI3K activity, thereby negatively regulating endosomal PtdIns3P levels. The chain is Suppressor of organelle fusion 2 from Caenorhabditis elegans.